We begin with the raw amino-acid sequence, 99 residues long: MANTKSAKKKIKVIRRRTIENKIQKFKMKKAIKEVKKALLSGDIEKAKELYSKAAKLIDQTAAKGVIHKNNASRKKSRLMKLINKYAALSSPQPESKAQ.

This sequence belongs to the bacterial ribosomal protein bS20 family.

In terms of biological role, binds directly to 16S ribosomal RNA. The polypeptide is Small ribosomal subunit protein bS20 (Caldicellulosiruptor bescii (strain ATCC BAA-1888 / DSM 6725 / KCTC 15123 / Z-1320) (Anaerocellum thermophilum)).